A 116-amino-acid polypeptide reads, in one-letter code: uncharacterized protein (116 aa).

Residues 20–42 traverse the membrane as a helical segment; sequence YLNKYYSVITYFLAFLTKFAILL. Residues 95–116 are disordered; the sequence is IEFQSKSSPVPPASESNKGINE.

It localises to the membrane. This is an uncharacterized protein from Saccharomyces cerevisiae (strain ATCC 204508 / S288c) (Baker's yeast).